Consider the following 449-residue polypeptide: Glutamyl-tRNA(Gln) amidotransferase subunit A (449 aa).

Residues lysine 51 and serine 126 each act as charge relay system in the active site. Residues 103 to 128 (STTESSAHGKTLNPVDSSRVPGGSSG) are disordered. The span at 119 to 128 (SSRVPGGSSG) shows a compositional bias: low complexity. Serine 150 (acyl-ester intermediate) is an active-site residue.

This sequence belongs to the amidase family. GatA subfamily. Heterotrimer of A, B and C subunits.

It catalyses the reaction L-glutamyl-tRNA(Gln) + L-glutamine + ATP + H2O = L-glutaminyl-tRNA(Gln) + L-glutamate + ADP + phosphate + H(+). Functionally, allows the formation of correctly charged Gln-tRNA(Gln) through the transamidation of misacylated Glu-tRNA(Gln) in organisms which lack glutaminyl-tRNA synthetase. The reaction takes place in the presence of glutamine and ATP through an activated gamma-phospho-Glu-tRNA(Gln). The polypeptide is Glutamyl-tRNA(Gln) amidotransferase subunit A (Wolinella succinogenes (strain ATCC 29543 / DSM 1740 / CCUG 13145 / JCM 31913 / LMG 7466 / NCTC 11488 / FDC 602W) (Vibrio succinogenes)).